A 217-amino-acid chain; its full sequence is UPF0502 protein ETA_20480 (217 aa).

The tract at residues 169 to 188 is disordered; that stretch reads GEVDESSRADGHHPDDHRGD. The span at 173–188 shows a compositional bias: basic and acidic residues; sequence ESSRADGHHPDDHRGD.

It belongs to the UPF0502 family.

The protein is UPF0502 protein ETA_20480 of Erwinia tasmaniensis (strain DSM 17950 / CFBP 7177 / CIP 109463 / NCPPB 4357 / Et1/99).